We begin with the raw amino-acid sequence, 454 residues long: L-serine dehydratase 1 (454 aa).

Belongs to the iron-sulfur dependent L-serine dehydratase family. The cofactor is [4Fe-4S] cluster. Activated by post-translational modification by a system involving at least three gene products. Activation is mimicked in vitro by iron and dithiothreitol. There is considerable evidence for a free-radical activation mechanism.

It carries out the reaction L-serine = pyruvate + NH4(+). Its pathway is carbohydrate biosynthesis; gluconeogenesis. Its function is as follows. Also deaminates threonine, particularly when it is present in high concentration. This Escherichia coli (strain K12) protein is L-serine dehydratase 1 (sdaA).